The primary structure comprises 508 residues: Putative POTE ankyrin domain family member M (508 aa).

ANK repeat units lie at residues 172–201 (QKRT…QLNI), 205–234 (KKRT…DPNI), 238–267 (YGNT…DIES), 271–300 (HGLT…NLNA), and 304–333 (YGRT…DVSS). The interval 369 to 487 (SSENSNPEQD…KQLSEEQNTG (119 aa)) is disordered. 2 stretches are compositionally biased toward basic and acidic residues: residues 377 to 392 (QDLK…RLKG) and 406 to 421 (EINK…EMKK). Residues 476-487 (TQKQLSEEQNTG) show a composition bias toward polar residues.

Belongs to the POTE family.

The polypeptide is Putative POTE ankyrin domain family member M (POTEM) (Homo sapiens (Human)).